We begin with the raw amino-acid sequence, 109 residues long: Phosphoribosyl-ATP pyrophosphatase (109 aa).

Belongs to the PRA-PH family.

It is found in the cytoplasm. It carries out the reaction 1-(5-phospho-beta-D-ribosyl)-ATP + H2O = 1-(5-phospho-beta-D-ribosyl)-5'-AMP + diphosphate + H(+). Its pathway is amino-acid biosynthesis; L-histidine biosynthesis; L-histidine from 5-phospho-alpha-D-ribose 1-diphosphate: step 2/9. The polypeptide is Phosphoribosyl-ATP pyrophosphatase (Geobacter metallireducens (strain ATCC 53774 / DSM 7210 / GS-15)).